Consider the following 215-residue polypeptide: 3-isopropylmalate dehydratase small subunit (215 aa).

The protein belongs to the LeuD family. LeuD type 1 subfamily. In terms of assembly, heterodimer of LeuC and LeuD.

The enzyme catalyses (2R,3S)-3-isopropylmalate = (2S)-2-isopropylmalate. It functions in the pathway amino-acid biosynthesis; L-leucine biosynthesis; L-leucine from 3-methyl-2-oxobutanoate: step 2/4. Catalyzes the isomerization between 2-isopropylmalate and 3-isopropylmalate, via the formation of 2-isopropylmaleate. This Hahella chejuensis (strain KCTC 2396) protein is 3-isopropylmalate dehydratase small subunit.